A 246-amino-acid chain; its full sequence is Exosome complex component Rrp41 (246 aa).

This sequence belongs to the RNase PH family. Rrp41 subfamily. As to quaternary structure, component of the archaeal exosome complex. Forms a hexameric ring-like arrangement composed of 3 Rrp41-Rrp42 heterodimers. The hexameric ring associates with a trimer of Rrp4 and/or Csl4 subunits.

It is found in the cytoplasm. Functionally, catalytic component of the exosome, which is a complex involved in RNA degradation. Has 3'-&gt;5' exoribonuclease activity. Can also synthesize heteromeric RNA-tails. In Pyrobaculum arsenaticum (strain DSM 13514 / JCM 11321 / PZ6), this protein is Exosome complex component Rrp41.